A 101-amino-acid chain; its full sequence is Large ribosomal subunit protein uL24 (101 aa).

It belongs to the universal ribosomal protein uL24 family. Part of the 50S ribosomal subunit.

Its function is as follows. One of two assembly initiator proteins, it binds directly to the 5'-end of the 23S rRNA, where it nucleates assembly of the 50S subunit. One of the proteins that surrounds the polypeptide exit tunnel on the outside of the subunit. In Streptococcus sanguinis (strain SK36), this protein is Large ribosomal subunit protein uL24.